A 153-amino-acid chain; its full sequence is 6,7-dimethyl-8-ribityllumazine synthase (153 aa).

5-amino-6-(D-ribitylamino)uracil is bound by residues F21, 55 to 57 (AFE), and 79 to 81 (TVI). 84 to 85 (AT) provides a ligand contact to (2S)-2-hydroxy-3-oxobutyl phosphate. The Proton donor role is filled by H87. F112 contacts 5-amino-6-(D-ribitylamino)uracil. R126 provides a ligand contact to (2S)-2-hydroxy-3-oxobutyl phosphate.

This sequence belongs to the DMRL synthase family. In terms of assembly, forms an icosahedral capsid composed of 60 subunits, arranged as a dodecamer of pentamers.

The catalysed reaction is (2S)-2-hydroxy-3-oxobutyl phosphate + 5-amino-6-(D-ribitylamino)uracil = 6,7-dimethyl-8-(1-D-ribityl)lumazine + phosphate + 2 H2O + H(+). Its pathway is cofactor biosynthesis; riboflavin biosynthesis; riboflavin from 2-hydroxy-3-oxobutyl phosphate and 5-amino-6-(D-ribitylamino)uracil: step 1/2. Its function is as follows. Catalyzes the formation of 6,7-dimethyl-8-ribityllumazine by condensation of 5-amino-6-(D-ribitylamino)uracil with 3,4-dihydroxy-2-butanone 4-phosphate. This is the penultimate step in the biosynthesis of riboflavin. In Bacillus anthracis (strain A0248), this protein is 6,7-dimethyl-8-ribityllumazine synthase.